The following is a 108-amino-acid chain: Protein YcgL (108 aa).

Positions Met12–Leu96 constitute a YcgL domain.

The sequence is that of Protein YcgL from Escherichia coli (strain K12 / MC4100 / BW2952).